We begin with the raw amino-acid sequence, 684 residues long: Glycine--tRNA ligase beta subunit (684 aa).

It belongs to the class-II aminoacyl-tRNA synthetase family. As to quaternary structure, tetramer of two alpha and two beta subunits.

It localises to the cytoplasm. The enzyme catalyses tRNA(Gly) + glycine + ATP = glycyl-tRNA(Gly) + AMP + diphosphate. The polypeptide is Glycine--tRNA ligase beta subunit (Pseudomonas syringae pv. syringae (strain B728a)).